Here is a 360-residue protein sequence, read N- to C-terminus: MKATIIFLLLAQVSWAGPFQQRGLFDFMLEDEASGIGPEDRIHEVLDLEPLGPVCPFRCQCHLRVVQCSDLGLDKVPKDLPPDTTLLDLQNNKITEIKDGDFKNLKNLHALILVNNKISKISPGAFTPLVKLERLYLSKNHLKELPEKMPKTLQELRVHENEITKVRKAVFNGLNQMIVVELGTNPLKSSGIENGAFQGMKKLSYIRIADTNITTIPPGLPPSLTELHLDGNKITKVDAASLRGLNNLAKLGLSFNSISAVDNGSLANTPHLRELHLDNNKLIKVPGGLADHKYIQVVYLHNNNISAVGSNDFCPPGYNTKKASYSGVSLFSNPVQYWEIQPSTFRCVYVRSAIQLGNYK.

An N-terminal signal peptide occupies residues 1 to 16; it reads MKATIIFLLLAQVSWA. Positions 17-30 are excised as a propeptide; sequence GPFQQRGLFDFMLE. O-linked (Xyl...) (glycosaminoglycan) serine glycosylation occurs at S34. Disulfide bonds link C55-C61 and C59-C68. LRR repeat units follow at residues 74-94, 95-118, 119-142, 143-163, 164-187, 188-213, 214-234, 235-258, 259-282, 283-305, 306-335, and 336-360; these read DKVPKDLPPDTTLLDLQNNKI, TEIKDGDFKNLKNLHALILVNNKI, SKISPGAFTPLVKLERLYLSKNHL, KELPEKMPKTLQELRVHENEI, TKVRKAVFNGLNQMIVVELGTNPL, KSSGIENGAFQGMKKLSYIRIADTNI, TTIPPGLPPSLTELHLDGNKI, TKVDAASLRGLNNLAKLGLSFNSI, SAVDNGSLANTPHLRELHLDNNKL, IKVPGGLADHKYIQVVYLHNNNI, SAVGSNDFCPPGYNTKKASYSGVSLFSNPV, and QYWEIQPSTFRCVYVRSAIQLGNYK. N212 carries an N-linked (GlcNAc...) asparagine glycan. 2 N-linked (GlcNAc...) asparagine glycosylation sites follow: N263 and N304. An intrachain disulfide couples C314 to C347.

The protein belongs to the small leucine-rich proteoglycan (SLRP) family. SLRP class I subfamily. Binds to type I and type II collagen, fibronectin and TGF-beta. Forms a ternary complex with MFAP2 and ELN. Interacts with DPT. The attached glycosaminoglycan chain can be either chondroitin sulfate or dermatan sulfate depending upon the tissue of origin.

It localises to the secreted. The protein localises to the extracellular space. The protein resides in the extracellular matrix. May affect the rate of fibrils formation. The protein is Decorin (DCN) of Equus caballus (Horse).